The chain runs to 478 residues: Glutamyl-tRNA(Gln) amidotransferase subunit A 2 (478 aa).

Active-site charge relay system residues include Lys79 and Ser154. Ser178 acts as the Acyl-ester intermediate in catalysis.

This sequence belongs to the amidase family. GatA subfamily. Heterotrimer of A, B and C subunits.

It carries out the reaction L-glutamyl-tRNA(Gln) + L-glutamine + ATP + H2O = L-glutaminyl-tRNA(Gln) + L-glutamate + ADP + phosphate + H(+). Its function is as follows. Allows the formation of correctly charged Gln-tRNA(Gln) through the transamidation of misacylated Glu-tRNA(Gln) in organisms which lack glutaminyl-tRNA synthetase. The reaction takes place in the presence of glutamine and ATP through an activated gamma-phospho-Glu-tRNA(Gln). The chain is Glutamyl-tRNA(Gln) amidotransferase subunit A 2 (gatA2) from Clostridium acetobutylicum (strain ATCC 824 / DSM 792 / JCM 1419 / IAM 19013 / LMG 5710 / NBRC 13948 / NRRL B-527 / VKM B-1787 / 2291 / W).